Here is a 512-residue protein sequence, read N- to C-terminus: PTS system mannitol-specific EIICB component (512 aa).

The Cytoplasmic portion of the chain corresponds to 1–28; it reads MSQTEEKKGIGRRVQAFGSFLSSMIMPN. Residues 17 to 349 form the PTS EIIC type-2 domain; it reads FGSFLSSMIM…MKFTKEPKQD (333 aa). Residues 29 to 50 traverse the membrane as a helical segment; it reads IGAFIAWGFIAAIFIDNGWFPN. The Extracellular portion of the chain corresponds to 51–54; it reads KDLA. The chain crosses the membrane as a helical span at residues 55–75; sequence TLAGPMITYLIPLLIAFSGGR. Residues 76 to 139 are Cytoplasmic-facing; it reads LIYDLRGGII…QGFEMLFNNF (64 aa). A helical transmembrane segment spans residues 140–161; sequence SAGILGFIMTIAGFKILAPLMK. Residues 162 to 170 lie on the Extracellular side of the membrane; that stretch reads FIMHILSVA. The helical transmembrane segment at 171 to 191 threads the bilayer; sequence VEALVHAHLLPLVSILVEPAK. The Cytoplasmic segment spans residues 192–278; sequence IVFLNNAINH…VLMRPLLFIA (87 aa). Residues 279–298 form a helical membrane-spanning segment; sequence VILGGMTGVATYQATGFGFK. The Extracellular portion of the chain corresponds to 299-318; that stretch reads SPASPGSFIVYCLNAPRGEF. The helical transmembrane segment at 319–340 threads the bilayer; that stretch reads LHMLLGVFLATLVSFVVAALIM. At 341–512 the chain is on the cytoplasmic side; that stretch reads KFTKEPKQDL…LNNLKKDDQA (172 aa). A compositionally biased stretch (low complexity) spans 365 to 376; that stretch reads SSVASKLVSSDK. The interval 365 to 401 is disordered; sequence SSVASKLVSSDKNVNTEENASGNVSETSSLDDDPEAL. Positions 380 to 392 are enriched in polar residues; sequence TEENASGNVSETS. The region spanning 419-512 is the PTS EIIB type-2 domain; the sequence is NHVIFACDAG…LNNLKKDDQA (94 aa). C425 (phosphocysteine intermediate; for EIIB activity) is an active-site residue. Phosphocysteine; by EIIA is present on C425.

In terms of assembly, homodimer.

Its subcellular location is the cell membrane. The enzyme catalyses D-mannitol(out) + N(pros)-phospho-L-histidyl-[protein] = D-mannitol 1-phosphate(in) + L-histidyl-[protein]. The phosphoenolpyruvate-dependent sugar phosphotransferase system (sugar PTS), a major carbohydrate active transport system, catalyzes the phosphorylation of incoming sugar substrates concomitantly with their translocation across the cell membrane. The enzyme II CmtAB PTS system is involved in D-mannitol transport. The chain is PTS system mannitol-specific EIICB component (mtlA) from Staphylococcus aureus (strain MRSA252).